We begin with the raw amino-acid sequence, 325 residues long: Elongation factor P--(R)-beta-lysine ligase (325 aa).

Residue 76-78 (SPE) coordinates substrate. ATP contacts are provided by residues 100–102 (RNE) and Asn-109. Residue Tyr-118 participates in substrate binding. 244 to 245 (EL) contributes to the ATP binding site. Glu-251 serves as a coordination point for substrate. Gly-300 is a binding site for ATP.

The protein belongs to the class-II aminoacyl-tRNA synthetase family. EpmA subfamily. In terms of assembly, homodimer.

It catalyses the reaction D-beta-lysine + L-lysyl-[protein] + ATP = N(6)-((3R)-3,6-diaminohexanoyl)-L-lysyl-[protein] + AMP + diphosphate + H(+). With EpmB is involved in the beta-lysylation step of the post-translational modification of translation elongation factor P (EF-P). Catalyzes the ATP-dependent activation of (R)-beta-lysine produced by EpmB, forming a lysyl-adenylate, from which the beta-lysyl moiety is then transferred to the epsilon-amino group of a conserved specific lysine residue in EF-P. This chain is Elongation factor P--(R)-beta-lysine ligase, found in Citrobacter koseri (strain ATCC BAA-895 / CDC 4225-83 / SGSC4696).